A 339-amino-acid chain; its full sequence is Phenylalanine--tRNA ligase alpha subunit (339 aa).

Glu-254 is a binding site for Mg(2+).

It belongs to the class-II aminoacyl-tRNA synthetase family. Phe-tRNA synthetase alpha subunit type 1 subfamily. Tetramer of two alpha and two beta subunits. It depends on Mg(2+) as a cofactor.

It is found in the cytoplasm. It carries out the reaction tRNA(Phe) + L-phenylalanine + ATP = L-phenylalanyl-tRNA(Phe) + AMP + diphosphate + H(+). The protein is Phenylalanine--tRNA ligase alpha subunit of Clostridium novyi (strain NT).